We begin with the raw amino-acid sequence, 266 residues long: MSEPEVTYSTVRLHKSSRLQKLVRHEETQGPREAGYRKCSVCWQLIVKALGILCFLLLITVAVLAVKIFQYGQHNQEIHETLNYHHNCSNMQSDFNLKEEMLTNRSIDSRPGNELLESLNREQNRGYSETKTDLDSSQDTGTGVKYWFCYRTKCYYFIMNKNTWSGCKQNCQHYSLPLVKIDDENELKFLQFQVIPDSYWIGLSYDKEKKEWAWIDNGQSKLDMKIRKMNFKPGGCVFLSKRRLEDTNCKNSHYCICGKKLDKFPH.

The Cytoplasmic portion of the chain corresponds to 1-44 (MSEPEVTYSTVRLHKSSRLQKLVRHEETQGPREAGYRKCSVCWQ). A helical; Signal-anchor for type II membrane protein transmembrane segment spans residues 45 to 66 (LIVKALGILCFLLLITVAVLAV). Residues 67-266 (KIFQYGQHNQ…CGKKLDKFPH (200 aa)) lie on the Extracellular side of the membrane. Asn87 and Asn104 each carry an N-linked (GlcNAc...) asparagine glycan. A C-type lectin domain is found at 143–261 (GVKYWFCYRT…SHYCICGKKL (119 aa)). 4 disulfide bridges follow: Cys149–Cys154, Cys167–Cys255, Cys171–Cys257, and Cys236–Cys249.

In terms of assembly, homodimer; disulfide-linked.

The protein localises to the membrane. Functionally, receptor on natural killer (NK) cells for class I MHC. The protein is Killer cell lectin-like receptor 6 (Klra6) of Mus musculus (Mouse).